The primary structure comprises 312 residues: Olfactory receptor 4F15 (312 aa).

Over 1 to 25 the chain is Extracellular; the sequence is MNGMNHSVVSEFVFMGLTNSREIQL. N-linked (GlcNAc...) asparagine glycosylation is present at N5. Residues 26-49 form a helical membrane-spanning segment; the sequence is LLFVFSLLFYFASMMGNLVIVFTV. Topologically, residues 50 to 57 are cytoplasmic; the sequence is TMDAHLHS. A helical transmembrane segment spans residues 58 to 79; that stretch reads PMYFLLANLSIIDMAFCSITAP. The Extracellular portion of the chain corresponds to 80–100; that stretch reads KMICDIFKKHKAISFRGCITQ. Cysteines 97 and 189 form a disulfide. The chain crosses the membrane as a helical span at residues 101–120; that stretch reads IFFSHALGGTEMVLLIAMAF. The Cytoplasmic portion of the chain corresponds to 121 to 139; that stretch reads DRYMAICKPLHYLTIMSPR. The helical transmembrane segment at 140–158 threads the bilayer; the sequence is MCLYFLATSSIIGLIHSLV. Topologically, residues 159-195 are extracellular; it reads QLVFVVDLPFCGPNIFDSFYCDLPRLLRLACTNTQEL. The helical transmembrane segment at 196 to 219 threads the bilayer; it reads EFMVTVNSGLISVGSFVLLVISYI. Over 220-235 the chain is Cytoplasmic; the sequence is FILFTVWKHSSGGLAK. The helical transmembrane segment at 236–258 threads the bilayer; sequence ALSTLSAHVTVVILFFGPLMFFY. Residues 259 to 269 are Extracellular-facing; sequence TWPSPTSHLDK. A helical membrane pass occupies residues 270–289; that stretch reads YLAIFDAFITPFLNPVIYTF. The Cytoplasmic portion of the chain corresponds to 290–312; sequence RNKDMKVAMRRLCSRLAHFTKIL.

It belongs to the G-protein coupled receptor 1 family.

Its subcellular location is the cell membrane. Its function is as follows. Odorant receptor. In Homo sapiens (Human), this protein is Olfactory receptor 4F15 (OR4F15).